Reading from the N-terminus, the 98-residue chain is MVLTRVIRAVGRSTLLETGVAGSGGGQLQLVRLPLRRKYTYRSGALKPMPEITPFGLFGIIATVIPGLLIGATISKNMANFLEENDLFVPSDDDDDDD.

The chain crosses the membrane as a helical span at residues 52-72 (ITPFGLFGIIATVIPGLLIGA).

This sequence belongs to the SMDT1/EMRE family.

The protein resides in the mitochondrion inner membrane. Essential regulatory subunit of the mitochondrial calcium uniporter (mcu) channel, a protein that mediates calcium uptake into mitochondria. This chain is Essential MCU regulator, mitochondrial, found in Anopheles gambiae (African malaria mosquito).